The following is a 199-amino-acid chain: MKHVNVLLAGGASRRFGEPKAFVKWKGRMLYECAKEALGEQTVIISRPEFIDRFQENGENEVYQDAEPFQGMGPLAGIYTAFKKTDGDLYTVLSCDTPLIQRRTMLELKRLMIAGADAVVPISDGQVQPLIAIYHKRIMPVLYDQLSEKRLRISDLLGRISVCYVQAENIGANPAEFININTRDDFSCLEEKSNSLKRD.

GTP-binding positions include 8–10 (LAG), lysine 20, aspartate 65, and aspartate 96. Mg(2+) is bound at residue aspartate 96.

It belongs to the MobA family. Mg(2+) is required as a cofactor.

The protein localises to the cytoplasm. The catalysed reaction is Mo-molybdopterin + GTP + H(+) = Mo-molybdopterin guanine dinucleotide + diphosphate. Its function is as follows. Transfers a GMP moiety from GTP to Mo-molybdopterin (Mo-MPT) cofactor (Moco or molybdenum cofactor) to form Mo-molybdopterin guanine dinucleotide (Mo-MGD) cofactor. This is Probable molybdenum cofactor guanylyltransferase from Bacillus subtilis (strain 168).